The chain runs to 331 residues: Anthranilate phosphoribosyltransferase (331 aa).

Residues glycine 78, 81-82 (GD), serine 86, 88-91 (NIST), 106-114 (KHGNKSITS), and serine 118 each bind 5-phospho-alpha-D-ribose 1-diphosphate. Position 78 (glycine 78) interacts with anthranilate. Serine 90 is a binding site for Mg(2+). Asparagine 109 is an anthranilate binding site. Residue arginine 163 participates in anthranilate binding. Positions 222 and 223 each coordinate Mg(2+).

Belongs to the anthranilate phosphoribosyltransferase family. Homodimer. Mg(2+) serves as cofactor.

The catalysed reaction is N-(5-phospho-beta-D-ribosyl)anthranilate + diphosphate = 5-phospho-alpha-D-ribose 1-diphosphate + anthranilate. It participates in amino-acid biosynthesis; L-tryptophan biosynthesis; L-tryptophan from chorismate: step 2/5. Catalyzes the transfer of the phosphoribosyl group of 5-phosphorylribose-1-pyrophosphate (PRPP) to anthranilate to yield N-(5'-phosphoribosyl)-anthranilate (PRA). The polypeptide is Anthranilate phosphoribosyltransferase (Staphylococcus epidermidis (strain ATCC 35984 / DSM 28319 / BCRC 17069 / CCUG 31568 / BM 3577 / RP62A)).